The primary structure comprises 1113 residues: Receptor-type guanylate cyclase gcy-18 (1113 aa).

The N-terminal stretch at 1-18 (MLKTLLFILIFFNIPIIA) is a signal peptide. Topologically, residues 19–499 (IEEIPDIKEN…RGQRCSYLLE (481 aa)) are extracellular. Residues Asn-72, Asn-369, and Asn-456 are each glycosylated (N-linked (GlcNAc...) asparagine). The helical transmembrane segment at 500 to 520 (ISVGSLIILLILISVVFFFLF) threads the bilayer. Residues 521–1113 (RYCENKQLEK…TNYIQNVEGV (593 aa)) are Cytoplasmic-facing. Positions 543-848 (IDEEQVKSMM…RVRLNTEMVL (306 aa)) constitute a Protein kinase domain. The stretch at 853-884 (SLVDQMMKMMEQYANNLEKLVAERTGMLEEAN) forms a coiled coil. One can recognise a Guanylate cyclase domain in the interval 918–1048 (TILFSDIVGF…DTVNVSSRME (131 aa)). 3 residues coordinate Mg(2+): Asp-923, Ile-924, and Asp-967.

The protein belongs to the adenylyl cyclase class-4/guanylyl cyclase family. In terms of tissue distribution, expressed specifically in AFD sensory neurons.

It localises to the cell membrane. Its subcellular location is the cell projection. It is found in the cilium. The enzyme catalyses GTP = 3',5'-cyclic GMP + diphosphate. In terms of biological role, guanylate cyclase involved in the production of the second messenger cGMP. Regulates thermotaxis responses in AFD sensory neurons. May regulate AFD neuronal activity such as calcium responses to temperature gradients. This is Receptor-type guanylate cyclase gcy-18 from Caenorhabditis elegans.